A 355-amino-acid polypeptide reads, in one-letter code: Peptide chain release factor 1 (355 aa).

Gln-231 is subject to N5-methylglutamine. Positions 280–291 (SERLAKESEARK) are enriched in basic and acidic residues. The segment at 280 to 303 (SERLAKESEARKSQVGSGDRSERI) is disordered.

It belongs to the prokaryotic/mitochondrial release factor family. In terms of processing, methylated by PrmC. Methylation increases the termination efficiency of RF1.

Its subcellular location is the cytoplasm. Its function is as follows. Peptide chain release factor 1 directs the termination of translation in response to the peptide chain termination codons UAG and UAA. The protein is Peptide chain release factor 1 of Campylobacter jejuni subsp. jejuni serotype O:6 (strain 81116 / NCTC 11828).